The sequence spans 288 residues: Energy-coupling factor transporter ATP-binding protein EcfA2 (288 aa).

Residues 2–244 (IKFEKVNYTY…VDFLKAHELG (243 aa)) enclose the ABC transporter domain. 39-46 (GHTGSGKS) serves as a coordination point for ATP. Glutamate 170 serves as the catalytic Proton acceptor.

It belongs to the ABC transporter superfamily. Energy-coupling factor EcfA family. In terms of assembly, forms a stable energy-coupling factor (ECF) transporter complex composed of 2 membrane-embedded substrate-binding proteins (S component), 2 ATP-binding proteins (A component) and 2 transmembrane proteins (T component). In L.lactis forms a stable complex with EcfA' and EcfT and substrate-binding components. In E.coli forms a stable complex with EcfA, EcfT and individually with 3 tested substrate-binding components (BioY, NiaX and ThiT) with a stoichiometry of 1.1:1:1. The core ECF complex interacts with a number of substrate-specific binding components, including BioY, BioY2, HmpT, NiaX, PanT, QueT, RibU and ThiT.

The protein localises to the cell membrane. Functionally, ATP-binding (A) component of a common energy-coupling factor (ECF) ABC-transporter complex. Unlike classic ABC transporters this ECF transporter provides the energy necessary to transport a number of different substrates. In this organism these probably include biotin, thiamine precursor, niacin, pantothenic acid, queuosine precursor, riboflavin and thiamine. Uptake of niacin or riboflavin into proteosomes containing EcfA1A2T and Niax or RibU has been demonstrated. Uptake requires hydrolyzable Mg-ATP and is substrate-specific; NiaX-containing proteosomes did not transport riboflavin. This chain is Energy-coupling factor transporter ATP-binding protein EcfA2, found in Lactococcus lactis subsp. cremoris (strain MG1363).